We begin with the raw amino-acid sequence, 475 residues long: tRNA modification GTPase MnmE (475 aa).

3 residues coordinate (6S)-5-formyl-5,6,7,8-tetrahydrofolate: R24, E81, and K124. A TrmE-type G domain is found at 220–397 (GLSVVLAGQP…LRKELLRLVG (178 aa)). N230 serves as a coordination point for K(+). GTP contacts are provided by residues 230–235 (NVGKSS), 249–255 (TPIAGTT), 274–277 (DTAG), and 378–380 (SAR). Mg(2+) is bound at residue S234. K(+) is bound by residues T249, I251, and T254. T255 lines the Mg(2+) pocket. K475 serves as a coordination point for (6S)-5-formyl-5,6,7,8-tetrahydrofolate.

It belongs to the TRAFAC class TrmE-Era-EngA-EngB-Septin-like GTPase superfamily. TrmE GTPase family. In terms of assembly, homodimer. Heterotetramer of two MnmE and two MnmG subunits. It depends on K(+) as a cofactor.

It localises to the cytoplasm. Its function is as follows. Exhibits a very high intrinsic GTPase hydrolysis rate. Involved in the addition of a carboxymethylaminomethyl (cmnm) group at the wobble position (U34) of certain tRNAs, forming tRNA-cmnm(5)s(2)U34. The protein is tRNA modification GTPase MnmE of Cupriavidus pinatubonensis (strain JMP 134 / LMG 1197) (Cupriavidus necator (strain JMP 134)).